The following is a 437-amino-acid chain: Purple acid phosphatase 21 (437 aa).

An N-terminal signal peptide occupies residues 1–25; the sequence is MKKMKIFGFLISFSLFFLSPFVCQA. An N-linked (GlcNAc...) asparagine glycan is attached at N30. Fe cation contacts are provided by D152, D179, and Y182. D179 provides a ligand contact to Zn(2+). Residues N212 and H296 each contribute to the Zn(2+) site. Residue N212 coordinates substrate. Residue H306 is the Proton donor of the active site. H333 is a binding site for Zn(2+). 333-335 contacts substrate; that stretch reads HVH. H335 lines the Fe cation pocket.

The protein belongs to the metallophosphoesterase superfamily. Purple acid phosphatase family. Homodimer. Fe cation serves as cofactor. Zn(2+) is required as a cofactor. In terms of tissue distribution, expressed flowers and siliques.

It is found in the secreted. The enzyme catalyses a phosphate monoester + H2O = an alcohol + phosphate. The protein is Purple acid phosphatase 21 (PAP21) of Arabidopsis thaliana (Mouse-ear cress).